The following is a 124-amino-acid chain: Small ribosomal subunit protein uS12 (124 aa).

3-methylthioaspartic acid is present on Asp89.

Belongs to the universal ribosomal protein uS12 family. As to quaternary structure, part of the 30S ribosomal subunit. Contacts proteins S8 and S17. May interact with IF1 in the 30S initiation complex.

Functionally, with S4 and S5 plays an important role in translational accuracy. Interacts with and stabilizes bases of the 16S rRNA that are involved in tRNA selection in the A site and with the mRNA backbone. Located at the interface of the 30S and 50S subunits, it traverses the body of the 30S subunit contacting proteins on the other side and probably holding the rRNA structure together. The combined cluster of proteins S8, S12 and S17 appears to hold together the shoulder and platform of the 30S subunit. This is Small ribosomal subunit protein uS12 from Buchnera aphidicola subsp. Acyrthosiphon pisum (strain 5A).